Consider the following 174-residue polypeptide: uncharacterized protein (174 aa).

The next 2 helical transmembrane spans lie at 8–28 and 146–166; these read FLFIVVFLFHGFMFSVVNYVF and IVSWILYVFLLATLFLSIQFI.

It is found in the cell membrane. This is an uncharacterized protein from Haemophilus influenzae (strain ATCC 51907 / DSM 11121 / KW20 / Rd).